Consider the following 209-residue polypeptide: N-(5'-phosphoribosyl)anthranilate isomerase (209 aa).

This sequence belongs to the TrpF family.

It carries out the reaction N-(5-phospho-beta-D-ribosyl)anthranilate = 1-(2-carboxyphenylamino)-1-deoxy-D-ribulose 5-phosphate. It functions in the pathway amino-acid biosynthesis; L-tryptophan biosynthesis; L-tryptophan from chorismate: step 3/5. This chain is N-(5'-phosphoribosyl)anthranilate isomerase, found in Pyrobaculum islandicum (strain DSM 4184 / JCM 9189 / GEO3).